We begin with the raw amino-acid sequence, 455 residues long: UDP-N-acetylmuramate--L-alanine ligase (455 aa).

Position 109–115 (109–115) interacts with ATP; it reads GTHGKTT.

The protein belongs to the MurCDEF family.

Its subcellular location is the cytoplasm. The enzyme catalyses UDP-N-acetyl-alpha-D-muramate + L-alanine + ATP = UDP-N-acetyl-alpha-D-muramoyl-L-alanine + ADP + phosphate + H(+). Its pathway is cell wall biogenesis; peptidoglycan biosynthesis. Cell wall formation. The chain is UDP-N-acetylmuramate--L-alanine ligase from Caldicellulosiruptor bescii (strain ATCC BAA-1888 / DSM 6725 / KCTC 15123 / Z-1320) (Anaerocellum thermophilum).